A 425-amino-acid chain; its full sequence is Enolase (425 aa).

Residue Gln163 coordinates (2R)-2-phosphoglycerate. Catalysis depends on Glu205, which acts as the Proton donor. Mg(2+)-binding residues include Asp242, Glu285, and Asp312. Residues Lys337, Arg366, Ser367, and Lys388 each contribute to the (2R)-2-phosphoglycerate site. Lys337 functions as the Proton acceptor in the catalytic mechanism.

It belongs to the enolase family. Mg(2+) is required as a cofactor.

The protein resides in the cytoplasm. The protein localises to the secreted. It localises to the cell surface. It carries out the reaction (2R)-2-phosphoglycerate = phosphoenolpyruvate + H2O. It participates in carbohydrate degradation; glycolysis; pyruvate from D-glyceraldehyde 3-phosphate: step 4/5. Catalyzes the reversible conversion of 2-phosphoglycerate (2-PG) into phosphoenolpyruvate (PEP). It is essential for the degradation of carbohydrates via glycolysis. The polypeptide is Enolase (Rhodospirillum rubrum (strain ATCC 11170 / ATH 1.1.1 / DSM 467 / LMG 4362 / NCIMB 8255 / S1)).